The sequence spans 185 residues: Photosystem I assembly protein Ycf4 (185 aa).

2 helical membrane passes run 22–42 (FFFA…GFSS) and 57–77 (IIFV…LFFS).

Belongs to the Ycf4 family.

It localises to the plastid. Its subcellular location is the chloroplast thylakoid membrane. Its function is as follows. Seems to be required for the assembly of the photosystem I complex. The protein is Photosystem I assembly protein Ycf4 of Welwitschia mirabilis (Tree tumbo).